The following is an 886-amino-acid chain: Coatomer subunit gamma (886 aa).

HEAT repeat units lie at residues 66 to 103 (VEATEVFFSVTKLFQSKDTGLRRMVYLIIKELSPSSDE), 288 to 325 (RELTPAITVLQLFLSSPRPVLRFAAVRTLNKVAMTHPM), 327 to 359 (VTNCNIDMESLISDQNRSIATLAITTLLKTGNE), 360 to 397 (SSVERLMKQITNFMSDIADEFKIVVVDAIRSLCVKFPL), and 472 to 509 (SDPSKYIRYIYNRVHLENATVRAAAVSTLAKFGFMVES). The tract at residues 592-613 (SQPLAEKKAQGKKPTGLGAPPA) is disordered.

It belongs to the COPG family. As to quaternary structure, oligomeric complex that consists of at least the alpha, beta, beta', gamma, delta, epsilon and zeta subunits.

Its subcellular location is the cytoplasm. The protein localises to the golgi apparatus membrane. It localises to the cytoplasmic vesicle. The protein resides in the COPI-coated vesicle membrane. The coatomer is a cytosolic protein complex that binds to dilysine motifs and reversibly associates with Golgi non-clathrin-coated vesicles, which further mediate biosynthetic protein transport from the ER, via the Golgi up to the trans Golgi network. Coatomer complex is required for budding from Golgi membranes, and is essential for the retrograde Golgi-to-ER transport of dilysine-tagged proteins. This is Coatomer subunit gamma from Arabidopsis thaliana (Mouse-ear cress).